The following is a 420-amino-acid chain: Gamma-glutamyl phosphate reductase (420 aa).

This sequence belongs to the gamma-glutamyl phosphate reductase family.

The protein localises to the cytoplasm. It carries out the reaction L-glutamate 5-semialdehyde + phosphate + NADP(+) = L-glutamyl 5-phosphate + NADPH + H(+). The protein operates within amino-acid biosynthesis; L-proline biosynthesis; L-glutamate 5-semialdehyde from L-glutamate: step 2/2. Functionally, catalyzes the NADPH-dependent reduction of L-glutamate 5-phosphate into L-glutamate 5-semialdehyde and phosphate. The product spontaneously undergoes cyclization to form 1-pyrroline-5-carboxylate. This is Gamma-glutamyl phosphate reductase from Laribacter hongkongensis (strain HLHK9).